A 343-amino-acid chain; its full sequence is uncharacterized protein (343 aa).

This is an uncharacterized protein from Acanthamoeba polyphaga mimivirus (APMV).